A 306-amino-acid polypeptide reads, in one-letter code: tRNA dimethylallyltransferase (306 aa).

G14–S21 is an ATP binding site. Residue T16 to S21 coordinates substrate. Residues D39–L42 form an interaction with substrate tRNA region.

The protein belongs to the IPP transferase family. In terms of assembly, monomer. Mg(2+) is required as a cofactor.

The enzyme catalyses adenosine(37) in tRNA + dimethylallyl diphosphate = N(6)-dimethylallyladenosine(37) in tRNA + diphosphate. Its function is as follows. Catalyzes the transfer of a dimethylallyl group onto the adenine at position 37 in tRNAs that read codons beginning with uridine, leading to the formation of N6-(dimethylallyl)adenosine (i(6)A). The polypeptide is tRNA dimethylallyltransferase (Synechococcus elongatus (strain ATCC 33912 / PCC 7942 / FACHB-805) (Anacystis nidulans R2)).